A 235-amino-acid polypeptide reads, in one-letter code: Probable transcriptional regulatory protein CJJ81176_1187 (235 aa).

The protein belongs to the TACO1 family.

The protein localises to the cytoplasm. The sequence is that of Probable transcriptional regulatory protein CJJ81176_1187 from Campylobacter jejuni subsp. jejuni serotype O:23/36 (strain 81-176).